Here is a 793-residue protein sequence, read N- to C-terminus: Methionine--tRNA ligase (793 aa).

A 'HIGH' region motif is present at residues 11–21; the sequence is PYVNNFPHLGN. Zn(2+) contacts are provided by cysteine 142, cysteine 145, cysteine 155, and cysteine 158. A 'KMSKS' region motif is present at residues 334–338; sequence KFSKS. Residue lysine 337 coordinates ATP. Over residues 581 to 590 the composition is skewed to basic and acidic residues; it reads SQKDRKKSEK. The interval 581–610 is disordered; sequence SQKDRKKSEKGCSACKDSGSSKSDAAASSA. Residues 591 to 610 show a composition bias toward low complexity; that stretch reads GCSACKDSGSSKSDAAASSA. Residues 622-727 enclose the tRNA-binding domain; sequence FSKKIALKTA…PWAAPGTPVI (106 aa).

This sequence belongs to the class-I aminoacyl-tRNA synthetase family. MetG type 1 subfamily. As to quaternary structure, homodimer. Requires Zn(2+) as cofactor.

It is found in the cytoplasm. The catalysed reaction is tRNA(Met) + L-methionine + ATP = L-methionyl-tRNA(Met) + AMP + diphosphate. In terms of biological role, is required not only for elongation of protein synthesis but also for the initiation of all mRNA translation through initiator tRNA(fMet) aminoacylation. The sequence is that of Methionine--tRNA ligase from Treponema denticola (strain ATCC 35405 / DSM 14222 / CIP 103919 / JCM 8153 / KCTC 15104).